A 194-amino-acid polypeptide reads, in one-letter code: Orotate phosphoribosyltransferase (194 aa).

117–125 (EDVVTTGLS) is a binding site for 5-phospho-alpha-D-ribose 1-diphosphate. Residues Thr-121 and Arg-149 each contribute to the orotate site.

This sequence belongs to the purine/pyrimidine phosphoribosyltransferase family. PyrE subfamily. In terms of assembly, homodimer. Requires Mg(2+) as cofactor.

It catalyses the reaction orotidine 5'-phosphate + diphosphate = orotate + 5-phospho-alpha-D-ribose 1-diphosphate. It participates in pyrimidine metabolism; UMP biosynthesis via de novo pathway; UMP from orotate: step 1/2. Functionally, catalyzes the transfer of a ribosyl phosphate group from 5-phosphoribose 1-diphosphate to orotate, leading to the formation of orotidine monophosphate (OMP). In Novosphingobium aromaticivorans (strain ATCC 700278 / DSM 12444 / CCUG 56034 / CIP 105152 / NBRC 16084 / F199), this protein is Orotate phosphoribosyltransferase.